The sequence spans 135 residues: HTH-type transcriptional repressor RghR (135 aa).

Residues 8–63 enclose the HTH cro/C1-type domain; it reads LRALREERKLTVNQLATYSGVSAAGISRIENGKRGVPKPATIKKLAEALKIPYEGL. A DNA-binding region (H-T-H motif) is located at residues 19-38; it reads VNQLATYSGVSAAGISRIEN.

Functionally, represses the expression of yvaM and both rapG and rapH. Binds directly to the promoter regions of yvaM, rapG and rapH. The polypeptide is HTH-type transcriptional repressor RghR (rghR) (Bacillus subtilis (strain 168)).